The chain runs to 310 residues: Carbamate kinase 1 (310 aa).

In terms of assembly, homodimer (predominantly) and homotetramer.

It is found in the cytoplasm. It catalyses the reaction hydrogencarbonate + NH4(+) + ATP = carbamoyl phosphate + ADP + H2O + H(+). Its pathway is metabolic intermediate metabolism; carbamoyl phosphate degradation; CO(2) and NH(3) from carbamoyl phosphate: step 1/1. Its activity is regulated as follows. Inhibited by adenosine(5')pentaphospho(5')adenosine (Ap5A), Ap6A and to a much lower extent by Ap4A. In terms of biological role, catalyzes the reversible synthesis of carbamate and ATP from carbamoyl phosphate and ADP. Can also catalyze, although with low efficiency, the phosphorylation of bicarbonate, leading to the formation of carboxyphosphate, an unstable intermediate found in the reactions catalyzed by carbamoyl-phosphate synthase and biotin carboxylase. Can also use acetate. This is Carbamate kinase 1 (arcC1) from Enterococcus faecium (Streptococcus faecium).